A 201-amino-acid chain; its full sequence is LexA repressor 1 (201 aa).

The H-T-H motif DNA-binding region spans leucine 27 to glutamine 47. Active-site for autocatalytic cleavage activity residues include serine 122 and lysine 159.

Belongs to the peptidase S24 family. In terms of assembly, homodimer.

The enzyme catalyses Hydrolysis of Ala-|-Gly bond in repressor LexA.. Functionally, represses a number of genes involved in the response to DNA damage (SOS response), including recA and lexA. In the presence of single-stranded DNA, RecA interacts with LexA causing an autocatalytic cleavage which disrupts the DNA-binding part of LexA, leading to derepression of the SOS regulon and eventually DNA repair. The sequence is that of LexA repressor 1 from Xanthomonas campestris pv. campestris (strain ATCC 33913 / DSM 3586 / NCPPB 528 / LMG 568 / P 25).